Here is a 366-residue protein sequence, read N- to C-terminus: Glutamate 5-kinase (366 aa).

Lysine 17 is an ATP binding site. Positions 57, 144, and 156 each coordinate substrate. Residues 176 to 177 and 216 to 222 contribute to the ATP site; these read SD and TGGMASK. The PUA domain maps to 278-352; that stretch reads QGILHIDEGA…GKSTQELPAE (75 aa).

Belongs to the glutamate 5-kinase family.

It is found in the cytoplasm. The catalysed reaction is L-glutamate + ATP = L-glutamyl 5-phosphate + ADP. It participates in amino-acid biosynthesis; L-proline biosynthesis; L-glutamate 5-semialdehyde from L-glutamate: step 1/2. In terms of biological role, catalyzes the transfer of a phosphate group to glutamate to form L-glutamate 5-phosphate. The polypeptide is Glutamate 5-kinase (Rhodococcus opacus (strain B4)).